The primary structure comprises 237 residues: Proteasome subunit beta 2 (237 aa).

Polar residues predominate over residues Met-1–Asp-14. Positions Met-1 to Gly-42 are cleaved as a propeptide — removed in mature form; by autocatalysis. Residues Met-1 to Thr-45 form a disordered region. The active-site Nucleophile is Thr-43.

This sequence belongs to the peptidase T1B family. The 20S proteasome core is composed of 14 alpha and 14 beta subunits that assemble into four stacked heptameric rings, resulting in a barrel-shaped structure. The two inner rings, each composed of seven catalytic beta subunits, are sandwiched by two outer rings, each composed of seven alpha subunits. The catalytic chamber with the active sites is on the inside of the barrel. Has a gated structure, the ends of the cylinder being occluded by the N-termini of the alpha-subunits. Is capped at one or both ends by the proteasome regulatory ATPase, PAN.

It is found in the cytoplasm. It carries out the reaction Cleavage of peptide bonds with very broad specificity.. Its activity is regulated as follows. The formation of the proteasomal ATPase PAN-20S proteasome complex, via the docking of the C-termini of PAN into the intersubunit pockets in the alpha-rings, triggers opening of the gate for substrate entry. Interconversion between the open-gate and close-gate conformations leads to a dynamic regulation of the 20S proteasome proteolysis activity. Component of the proteasome core, a large protease complex with broad specificity involved in protein degradation. The chain is Proteasome subunit beta 2 from Haloterrigena turkmenica (strain ATCC 51198 / DSM 5511 / JCM 9101 / NCIMB 13204 / VKM B-1734 / 4k) (Halococcus turkmenicus).